Reading from the N-terminus, the 174-residue chain is UPF0316 protein lmo1776 (174 aa).

3 helical membrane-spanning segments follow: residues 4–24, 36–56, and 62–82; these read GIFIVVTIFIVNILYVTIYTV, LAALSSVFEMIIYVVALSLVL, and IANVLAYAVGFGVGIIVGMKI.

Belongs to the UPF0316 family.

It is found in the cell membrane. This Listeria monocytogenes serovar 1/2a (strain ATCC BAA-679 / EGD-e) protein is UPF0316 protein lmo1776.